Reading from the N-terminus, the 578-residue chain is Palmitoyltransferase ZDHHC1 (578 aa).

Residues 1-41 lie on the Cytoplasmic side of the membrane; sequence MDVCSKNSNRTAPVSEGGIRRADVPLCSRTNGWSWPPHPFQ. A helical transmembrane segment spans residues 42-62; the sequence is FLAWLLYLYFAVTGFGVFVPL. Residues 63 to 71 lie on the Lumenal side of the membrane; sequence LPTHWIPAG. Residues 72–92 traverse the membrane as a helical segment; that stretch reads YICTGITFVCHLFMHLMAVSI. Residues 93 to 174 lie on the Cytoplasmic side of the membrane; that stretch reads DPADYNVRAK…YWLFLNSVIS (82 aa). A DHHC domain is found at 121–173; that stretch reads ENCHCYLCEVDVGPKSKHCSACNKCVASFDHHCRWLNNCVGSRNYWLFLNSVI. The S-palmitoyl cysteine intermediate role is filled by C153. The helical transmembrane segment at 175–195 threads the bilayer; it reads ALLGIVLVVVIASYVFIEFFL. Over 196–230 the chain is Lumenal; that stretch reads DPSKLRSDKHFQQVRNESVVWFVFLPVAPVTTAGP. A helical transmembrane segment spans residues 231–251; that stretch reads AIPALAGVTIALGLLSALLLG. Residues 252–578 lie on the Cytoplasmic side of the membrane; the sequence is HLLCFHIYLM…PSSRVGTSLA (327 aa). The span at 278 to 288 shows a compositional bias: basic and acidic residues; that stretch reads QEAGDSRKPPP. Disordered regions lie at residues 278–298, 345–376, 497–517, and 532–578; these read QEAG…PKLN, HMDE…KRKV, SAAG…TAAR, and SMFM…TSLA. A compositionally biased stretch (basic residues) spans 363–376; that stretch reads PHPHKHAQKKKRKV. The segment covering 552–561 has biased composition (basic residues); it reads AAKRKQTGKK.

This sequence belongs to the DHHC palmitoyltransferase family.

It is found in the endosome membrane. The protein localises to the endoplasmic reticulum membrane. Its subcellular location is the golgi apparatus. The enzyme catalyses L-cysteinyl-[protein] + hexadecanoyl-CoA = S-hexadecanoyl-L-cysteinyl-[protein] + CoA. In terms of biological role, palmitoyltransferase that catalyzes the addition of palmitate onto various protein substrates, such as ncdn and nlrp3. The sequence is that of Palmitoyltransferase ZDHHC1 from Danio rerio (Zebrafish).